Reading from the N-terminus, the 468-residue chain is ATP synthase subunit beta (468 aa).

148-155 (GGAGVGKT) serves as a coordination point for ATP.

It belongs to the ATPase alpha/beta chains family. As to quaternary structure, F-type ATPases have 2 components, CF(1) - the catalytic core - and CF(0) - the membrane proton channel. CF(1) has five subunits: alpha(3), beta(3), gamma(1), delta(1), epsilon(1). CF(0) has three main subunits: a(1), b(2) and c(9-12). The alpha and beta chains form an alternating ring which encloses part of the gamma chain. CF(1) is attached to CF(0) by a central stalk formed by the gamma and epsilon chains, while a peripheral stalk is formed by the delta and b chains.

The protein localises to the cell membrane. The catalysed reaction is ATP + H2O + 4 H(+)(in) = ADP + phosphate + 5 H(+)(out). Its function is as follows. Produces ATP from ADP in the presence of a proton gradient across the membrane. The catalytic sites are hosted primarily by the beta subunits. In Stenotrophomonas maltophilia (strain K279a), this protein is ATP synthase subunit beta.